Reading from the N-terminus, the 168-residue chain is Phosphopantetheine adenylyltransferase (168 aa).

T9 contacts substrate. Residues 9–10 and H17 each bind ATP; that span reads TF. Residues K41, L73, and R87 each coordinate substrate. ATP is bound by residues 88–90, E98, and 123–129; these read GLR and YQFISGT.

Belongs to the bacterial CoaD family. As to quaternary structure, homohexamer. Requires Mg(2+) as cofactor.

Its subcellular location is the cytoplasm. It carries out the reaction (R)-4'-phosphopantetheine + ATP + H(+) = 3'-dephospho-CoA + diphosphate. Its pathway is cofactor biosynthesis; coenzyme A biosynthesis; CoA from (R)-pantothenate: step 4/5. Functionally, reversibly transfers an adenylyl group from ATP to 4'-phosphopantetheine, yielding dephospho-CoA (dPCoA) and pyrophosphate. This Ralstonia nicotianae (strain ATCC BAA-1114 / GMI1000) (Ralstonia solanacearum) protein is Phosphopantetheine adenylyltransferase.